The sequence spans 394 residues: Obg-like ATPase 1 (394 aa).

The region spanning 25-282 (LKIGIVGLPN…MPPDEAAKYC (258 aa)) is the OBG-type G domain. ATP is bound by residues 34 to 39 (NVGKST), 56 to 60 (FCTID), and 94 to 97 (DIAG). Mg(2+) is bound by residues Ser-38 and Thr-58. A GTP-binding site is contributed by Phe-129. Residues 230 to 231 (NM), Met-231, and 263 to 265 (SCA) contribute to the ATP site. 263–265 (SCA) lines the GTP pocket. Residues 303 to 386 (HLIYFFTAGP…QDADIIFFKF (84 aa)) form the TGS domain.

This sequence belongs to the TRAFAC class OBG-HflX-like GTPase superfamily. OBG GTPase family. YchF/OLA1 subfamily. As to quaternary structure, monomer (Potential). Interacts with GAP1. It depends on Mg(2+) as a cofactor.

It localises to the cytoplasm. Its subcellular location is the cell membrane. The protein resides in the cytosol. Activated by GAP1. Its function is as follows. Hydrolyzes ATP, and can also hydrolyze GTP with lower efficiency. Has lower affinity for GTP (Potential). Exhibits GTPase activity. Exhibits similar binding affinities and hydrolytic activities toward both GTP and ATP. Binds to the 26 S ribosomal RNA in vitro, but not to the 5.8 S or 18 S rRNA. Confers sensitivity to salinity stress by suppressing the anti-oxidation enzymatic activities and increasing lipid peroxidation thus leading to the accumulation of reactive oxygen species (ROS). The chain is Obg-like ATPase 1 from Oryza sativa subsp. indica (Rice).